A 29-amino-acid chain; its full sequence is Lambda-theraphotoxin-Ec2b (29 aa).

Intrachain disulfides connect C2-C16, C9-C21, and C15-C25.

The protein belongs to the neurotoxin 30 (phrixotoxin) family. As to expression, expressed by the venom gland.

The protein resides in the secreted. Insect-selective neurotoxin that potently blocks insect calcium-activated potassium (BKCa) channels (Slo-type) in cockroach dorsal unpaired median (DUM) neurons (IC(50)=25.3 nM). This occurs in the absence of any shifts in the voltage dependence of activation. May interact with the turret and/or loop region of the external entrance to the channel and does not project deeply into the pore of the channel. In vivo, does not show toxicity in mice after intracerebroventricular injection of up to 25 pmol/g (1.8 ug/20 g mouse). The sequence is that of Lambda-theraphotoxin-Ec2b from Eucratoscelus constrictus (African red-rump baboon spider).